We begin with the raw amino-acid sequence, 150 residues long: 3-dehydroquinate dehydratase (150 aa).

The active-site Proton acceptor is tyrosine 26. The substrate site is built by asparagine 77, histidine 83, and aspartate 90. The active-site Proton donor is the histidine 103. Residues 104–105 and arginine 114 contribute to the substrate site; that span reads LS.

The protein belongs to the type-II 3-dehydroquinase family. In terms of assembly, homododecamer.

It carries out the reaction 3-dehydroquinate = 3-dehydroshikimate + H2O. Its pathway is metabolic intermediate biosynthesis; chorismate biosynthesis; chorismate from D-erythrose 4-phosphate and phosphoenolpyruvate: step 3/7. Functionally, catalyzes a trans-dehydration via an enolate intermediate. This is 3-dehydroquinate dehydratase from Mannheimia succiniciproducens (strain KCTC 0769BP / MBEL55E).